The primary structure comprises 239 residues: Putative 3-methyladenine DNA glycosylase (239 aa).

This sequence belongs to the DNA glycosylase MPG family.

The chain is Putative 3-methyladenine DNA glycosylase from Pseudomonas aeruginosa (strain UCBPP-PA14).